The sequence spans 368 residues: 4-hydroxy-3-methylbut-2-en-1-yl diphosphate synthase (flavodoxin) (368 aa).

Positions 271, 274, 306, and 313 each coordinate [4Fe-4S] cluster.

It belongs to the IspG family. The cofactor is [4Fe-4S] cluster.

The enzyme catalyses (2E)-4-hydroxy-3-methylbut-2-enyl diphosphate + oxidized [flavodoxin] + H2O + 2 H(+) = 2-C-methyl-D-erythritol 2,4-cyclic diphosphate + reduced [flavodoxin]. It participates in isoprenoid biosynthesis; isopentenyl diphosphate biosynthesis via DXP pathway; isopentenyl diphosphate from 1-deoxy-D-xylulose 5-phosphate: step 5/6. Its function is as follows. Converts 2C-methyl-D-erythritol 2,4-cyclodiphosphate (ME-2,4cPP) into 1-hydroxy-2-methyl-2-(E)-butenyl 4-diphosphate. The sequence is that of 4-hydroxy-3-methylbut-2-en-1-yl diphosphate synthase (flavodoxin) from Buchnera aphidicola subsp. Acyrthosiphon pisum (strain APS) (Acyrthosiphon pisum symbiotic bacterium).